The sequence spans 427 residues: Light-independent protochlorophyllide reductase subunit N (427 aa).

[4Fe-4S] cluster is bound by residues cysteine 29, cysteine 54, and cysteine 115.

The protein belongs to the BchN/ChlN family. Protochlorophyllide reductase is composed of three subunits; BchL, BchN and BchB. Forms a heterotetramer of two BchB and two BchN subunits. Requires [4Fe-4S] cluster as cofactor.

It catalyses the reaction chlorophyllide a + oxidized 2[4Fe-4S]-[ferredoxin] + 2 ADP + 2 phosphate = protochlorophyllide a + reduced 2[4Fe-4S]-[ferredoxin] + 2 ATP + 2 H2O. It functions in the pathway porphyrin-containing compound metabolism; bacteriochlorophyll biosynthesis (light-independent). Its function is as follows. Component of the dark-operative protochlorophyllide reductase (DPOR) that uses Mg-ATP and reduced ferredoxin to reduce ring D of protochlorophyllide (Pchlide) to form chlorophyllide a (Chlide). This reaction is light-independent. The NB-protein (BchN-BchB) is the catalytic component of the complex. The chain is Light-independent protochlorophyllide reductase subunit N from Bradyrhizobium sp. (strain ORS 278).